Reading from the N-terminus, the 157-residue chain is Phosphopantetheine adenylyltransferase (157 aa).

Thr-8 serves as a coordination point for substrate. ATP-binding positions include Thr-8 to Phe-9 and His-16. Residues Lys-40, Thr-72, and Arg-86 each coordinate substrate. Residues Gly-87–Arg-89, Glu-97, and Tyr-122–Ser-128 contribute to the ATP site.

This sequence belongs to the bacterial CoaD family. In terms of assembly, homohexamer. Requires Mg(2+) as cofactor.

It localises to the cytoplasm. It carries out the reaction (R)-4'-phosphopantetheine + ATP + H(+) = 3'-dephospho-CoA + diphosphate. It participates in cofactor biosynthesis; coenzyme A biosynthesis; CoA from (R)-pantothenate: step 4/5. In terms of biological role, reversibly transfers an adenylyl group from ATP to 4'-phosphopantetheine, yielding dephospho-CoA (dPCoA) and pyrophosphate. This chain is Phosphopantetheine adenylyltransferase, found in Prochlorococcus marinus (strain MIT 9215).